A 364-amino-acid chain; its full sequence is Myeloid cell surface antigen CD33 (364 aa).

The signal sequence occupies residues 1–17; the sequence is MPLLLLLPLLWAGALAM. Residues 18–259 lie on the Extracellular side of the membrane; the sequence is DPNFWLQVQE…KQETRAGVVH (242 aa). An Ig-like V-type domain is found at 19 to 135; it reads PNFWLQVQES…KYSYKSPQLS (117 aa). Disulfide bonds link cysteine 36/cysteine 169, cysteine 41/cysteine 101, and cysteine 163/cysteine 212. Asparagine 100 and asparagine 113 each carry an N-linked (GlcNAc...) asparagine glycan. Arginine 119 is a binding site for N-acetylneuraminate. In terms of domain architecture, Ig-like C2-type spans 145–228; sequence PKILIPGTLE…AGVTTERTIQ (84 aa). Residue glutamate 154 coordinates D-galactose. N-linked (GlcNAc...) asparagine glycosylation is found at asparagine 160, asparagine 209, and asparagine 230. The chain crosses the membrane as a helical span at residues 260-282; sequence GAIGGAGVTALLALCLCLIFFIV. Over 283–364 the chain is Cytoplasmic; that stretch reads KTHRRKAART…STEYSEVRTQ (82 aa). Residues 290–364 are disordered; the sequence is ARTAVGRNDT…STEYSEVRTQ (75 aa). 2 short sequence motifs (ITIM motif) span residues 338-343 and 356-361; these read LHYASL and TEYSEV. A phosphotyrosine; by LCK mark is found at tyrosine 340 and tyrosine 358.

Belongs to the immunoglobulin superfamily. SIGLEC (sialic acid binding Ig-like lectin) family. In terms of assembly, homodimer; disulfide-linked. Interacts with PTPN6/SHP-1 and PTPN11/SHP-2 upon phosphorylation. Interacts with C1QA (via C-terminus); this interaction activates CD33 inhibitory motifs. Glycosylated. Glycosylation at Asn-100 is critical for regulating ligand recognition. In terms of processing, phosphorylation of Tyr-340 is involved in binding to PTPN6 and PTPN11. Phosphorylation of Tyr-358 is involved in binding to PTPN6. LCK phosphorylates Tyr-340 efficiently and Tyr-358 to a lesser extent. Monocytic/myeloid lineage cells. In the brain, CD33 is mainly expressed on microglial cells.

Its subcellular location is the cell membrane. The protein localises to the peroxisome. In terms of biological role, sialic-acid-binding immunoglobulin-like lectin (Siglec) that plays a role in mediating cell-cell interactions and in maintaining immune cells in a resting state. Preferentially recognizes and binds alpha-2,3- and more avidly alpha-2,6-linked sialic acid-bearing glycans. Upon engagement of ligands such as C1q or syalylated glycoproteins, two immunoreceptor tyrosine-based inhibitory motifs (ITIMs) located in CD33 cytoplasmic tail are phosphorylated by Src-like kinases such as LCK. These phosphorylations provide docking sites for the recruitment and activation of protein-tyrosine phosphatases PTPN6/SHP-1 and PTPN11/SHP-2. In turn, these phosphatases regulate downstream pathways through dephosphorylation of signaling molecules. One of the repressive effect of CD33 on monocyte activation requires phosphoinositide 3-kinase/PI3K. This Homo sapiens (Human) protein is Myeloid cell surface antigen CD33 (CD33).